A 587-amino-acid chain; its full sequence is Aspartate--tRNA ligase (587 aa).

Residue E174 participates in L-aspartate binding. Residues 198-201 form an aspartate region; the sequence is QITK. Residue R220 participates in L-aspartate binding. ATP is bound by residues 220-222 and Q229; that span reads RDE. H443 contributes to the L-aspartate binding site. E477 provides a ligand contact to ATP. L-aspartate is bound at residue R484. 529–532 provides a ligand contact to ATP; the sequence is GLDR.

Belongs to the class-II aminoacyl-tRNA synthetase family. Type 1 subfamily. Homodimer.

Its subcellular location is the cytoplasm. It carries out the reaction tRNA(Asp) + L-aspartate + ATP = L-aspartyl-tRNA(Asp) + AMP + diphosphate. Catalyzes the attachment of L-aspartate to tRNA(Asp) in a two-step reaction: L-aspartate is first activated by ATP to form Asp-AMP and then transferred to the acceptor end of tRNA(Asp). The polypeptide is Aspartate--tRNA ligase (Streptococcus pneumoniae (strain Hungary19A-6)).